The primary structure comprises 345 residues: Protein RecA (345 aa).

80 to 87 contributes to the ATP binding site; the sequence is GPESSGKT.

It belongs to the RecA family.

It localises to the cytoplasm. In terms of biological role, can catalyze the hydrolysis of ATP in the presence of single-stranded DNA, the ATP-dependent uptake of single-stranded DNA by duplex DNA, and the ATP-dependent hybridization of homologous single-stranded DNAs. It interacts with LexA causing its activation and leading to its autocatalytic cleavage. The chain is Protein RecA from Mycoplasma mycoides subsp. mycoides SC (strain CCUG 32753 / NCTC 10114 / PG1).